The sequence spans 341 residues: Methionine import ATP-binding protein MetN (341 aa).

The ABC transporter domain occupies 2–237 (IELCGLKKSF…PESLARKMLY (236 aa)). Residue 34–41 (GKSGAGKS) coordinates ATP.

Belongs to the ABC transporter superfamily. Methionine importer (TC 3.A.1.24) family. As to quaternary structure, the complex is composed of two ATP-binding proteins (MetN), two transmembrane proteins (MetI) and a solute-binding protein (MetQ).

Its subcellular location is the cell inner membrane. It catalyses the reaction L-methionine(out) + ATP + H2O = L-methionine(in) + ADP + phosphate + H(+). It carries out the reaction D-methionine(out) + ATP + H2O = D-methionine(in) + ADP + phosphate + H(+). Functionally, part of the ABC transporter complex MetNIQ involved in methionine import. Responsible for energy coupling to the transport system. This is Methionine import ATP-binding protein MetN from Legionella pneumophila (strain Lens).